A 568-amino-acid chain; its full sequence is 2-succinyl-5-enolpyruvyl-6-hydroxy-3-cyclohexene-1-carboxylate synthase (568 aa).

Belongs to the TPP enzyme family. MenD subfamily. Homodimer. Requires Mg(2+) as cofactor. It depends on Mn(2+) as a cofactor. The cofactor is thiamine diphosphate.

The catalysed reaction is isochorismate + 2-oxoglutarate + H(+) = 5-enolpyruvoyl-6-hydroxy-2-succinyl-cyclohex-3-ene-1-carboxylate + CO2. The protein operates within quinol/quinone metabolism; 1,4-dihydroxy-2-naphthoate biosynthesis; 1,4-dihydroxy-2-naphthoate from chorismate: step 2/7. It participates in quinol/quinone metabolism; menaquinone biosynthesis. Functionally, catalyzes the thiamine diphosphate-dependent decarboxylation of 2-oxoglutarate and the subsequent addition of the resulting succinic semialdehyde-thiamine pyrophosphate anion to isochorismate to yield 2-succinyl-5-enolpyruvyl-6-hydroxy-3-cyclohexene-1-carboxylate (SEPHCHC). This is 2-succinyl-5-enolpyruvyl-6-hydroxy-3-cyclohexene-1-carboxylate synthase from Mannheimia succiniciproducens (strain KCTC 0769BP / MBEL55E).